Here is a 423-residue protein sequence, read N- to C-terminus: Hydroxymethylglutaryl-CoA synthase-like protein AKT4-1 (423 aa).

This sequence belongs to the thiolase-like superfamily. HMG-CoA synthase family.

It functions in the pathway mycotoxin biosynthesis. Functionally, hydroxymethylglutaryl-CoA synthase-like protein; part of the gene clusters that mediate the biosynthesis of the host-selective toxins (HSTs) AK-toxins responsible for Japanese pear black spot disease by the Japanese pear pathotype. AK-toxins are esters of 9,10-epoxy 8-hydroxy 9-methyldecatrienoic acid (EDA). On cellular level, AK-toxins affect plasma membrane of susceptible cells and cause a sudden increase in loss of K(+) after a few minutes of toxin treatment. The acyl-CoA ligase AKT1, the hydrolase AKT2 and enoyl-CoA hydratase AKT3 are all involved in the biosynthesis of the AK-, AF- and ACT-toxin common 9,10-epoxy-8-hydroxy-9-methyl-decatrienoic acid (EDA) structural moiety. Part of the EDA biosynthesis occurs in the peroxisome since these 3 enzymes are localized in peroxisomes. The exact roles of the 3 enzymes, as well as of additional AK-toxin clusters enzymes, including AKT4, AKT6 and AKTS1, have still to be elucidated. The Cytochrome P450 monooxygenase AKT7 on the other side functions to limit production of EDA and AK-toxin, probably via the catalysis of a side reaction of EDA or its precursor. The protein is Hydroxymethylglutaryl-CoA synthase-like protein AKT4-1 of Alternaria alternata (Alternaria rot fungus).